Reading from the N-terminus, the 162-residue chain is MKHRVVGRRLDRTTEHRTAMFKNMVTSLFRHERIVTTTPKAKELKRFADKVITQAKRGTPHARRLAHRNVRDVEVLNKLFDTLAERFKARPGGYTRIVRVGRRAGDNAEMSVIELVDRAPAAAPEAEEKGEKKAAGKAEKAPKAAKAPKAEKKPAKKAAKAE.

Positions 118 to 162 (RAPAAAPEAEEKGEKKAAGKAEKAPKAAKAPKAEKKPAKKAAKAE) are disordered. The span at 126 to 162 (AEEKGEKKAAGKAEKAPKAAKAPKAEKKPAKKAAKAE) shows a compositional bias: basic and acidic residues.

Belongs to the bacterial ribosomal protein bL17 family. In terms of assembly, part of the 50S ribosomal subunit. Contacts protein L32.

The sequence is that of Large ribosomal subunit protein bL17 from Anaeromyxobacter dehalogenans (strain 2CP-C).